The following is a 216-amino-acid chain: Peptide methionine sulfoxide reductase MsrA (216 aa).

The active site involves Cys-54.

Belongs to the MsrA Met sulfoxide reductase family.

It carries out the reaction L-methionyl-[protein] + [thioredoxin]-disulfide + H2O = L-methionyl-(S)-S-oxide-[protein] + [thioredoxin]-dithiol. The catalysed reaction is [thioredoxin]-disulfide + L-methionine + H2O = L-methionine (S)-S-oxide + [thioredoxin]-dithiol. Has an important function as a repair enzyme for proteins that have been inactivated by oxidation. Catalyzes the reversible oxidation-reduction of methionine sulfoxide in proteins to methionine. The polypeptide is Peptide methionine sulfoxide reductase MsrA (Xanthomonas oryzae pv. oryzae (strain PXO99A)).